We begin with the raw amino-acid sequence, 319 residues long: Lipoyl synthase (319 aa).

The tract at residues 1–32 is disordered; it reads MVVLVDTVSSTPVRPRHPEKAARPDSLSPKKP. Residues 16–32 are compositionally biased toward basic and acidic residues; sequence RHPEKAARPDSLSPKKP. [4Fe-4S] cluster contacts are provided by C61, C66, C72, C87, C91, C94, and S300. Residues 73-289 form the Radical SAM core domain; that stretch reads WDKKHATFMI…GKTAYAKGFL (217 aa).

The protein belongs to the radical SAM superfamily. Lipoyl synthase family. It depends on [4Fe-4S] cluster as a cofactor.

The protein resides in the cytoplasm. It catalyses the reaction [[Fe-S] cluster scaffold protein carrying a second [4Fe-4S](2+) cluster] + N(6)-octanoyl-L-lysyl-[protein] + 2 oxidized [2Fe-2S]-[ferredoxin] + 2 S-adenosyl-L-methionine + 4 H(+) = [[Fe-S] cluster scaffold protein] + N(6)-[(R)-dihydrolipoyl]-L-lysyl-[protein] + 4 Fe(3+) + 2 hydrogen sulfide + 2 5'-deoxyadenosine + 2 L-methionine + 2 reduced [2Fe-2S]-[ferredoxin]. It functions in the pathway protein modification; protein lipoylation via endogenous pathway; protein N(6)-(lipoyl)lysine from octanoyl-[acyl-carrier-protein]: step 2/2. Its function is as follows. Catalyzes the radical-mediated insertion of two sulfur atoms into the C-6 and C-8 positions of the octanoyl moiety bound to the lipoyl domains of lipoate-dependent enzymes, thereby converting the octanoylated domains into lipoylated derivatives. The protein is Lipoyl synthase of Rhodopseudomonas palustris (strain BisB5).